The sequence spans 217 residues: Large ribosomal subunit protein bL25 (217 aa).

The protein belongs to the bacterial ribosomal protein bL25 family. CTC subfamily. Part of the 50S ribosomal subunit; part of the 5S rRNA/L5/L18/L25 subcomplex. Contacts the 5S rRNA. Binds to the 5S rRNA independently of L5 and L18.

This is one of the proteins that binds to the 5S RNA in the ribosome where it forms part of the central protuberance. In Methylobacterium sp. (strain 4-46), this protein is Large ribosomal subunit protein bL25.